The following is a 318-amino-acid chain: L-lactate dehydrogenase (318 aa).

NAD(+) contacts are provided by Val15, Asp36, and Lys41. Arg89 is a substrate binding site. NAD(+)-binding positions include Ser102, 119–121 (ITN), and Thr144. 121–124 (NPVD) serves as a coordination point for substrate. Position 149-152 (149-152 (DSAR)) interacts with substrate. His176 (proton acceptor) is an active-site residue. Thr231 lines the substrate pocket.

The protein belongs to the LDH/MDH superfamily. LDH family. In terms of assembly, homotetramer.

Its subcellular location is the cytoplasm. It catalyses the reaction (S)-lactate + NAD(+) = pyruvate + NADH + H(+). It functions in the pathway fermentation; pyruvate fermentation to lactate; (S)-lactate from pyruvate: step 1/1. In terms of biological role, catalyzes the conversion of lactate to pyruvate. This is L-lactate dehydrogenase from Fusobacterium nucleatum subsp. nucleatum (strain ATCC 25586 / DSM 15643 / BCRC 10681 / CIP 101130 / JCM 8532 / KCTC 2640 / LMG 13131 / VPI 4355).